The primary structure comprises 123 residues: MSCHLIQQIENQQRKEPAETFRVGDTVRVHFKIVEGKTERIQAYEGLVLCFKNSGVRRTFTVRKNSYGVGVERIFPLHSPRIERVDVVRAGKVRRAKLYYIREKIGKAARIKARIVKKPSPSA.

Belongs to the bacterial ribosomal protein bL19 family.

Its function is as follows. This protein is located at the 30S-50S ribosomal subunit interface and may play a role in the structure and function of the aminoacyl-tRNA binding site. The polypeptide is Large ribosomal subunit protein bL19 (rplS) (Treponema pallidum (strain Nichols)).